The following is a 235-amino-acid chain: Glycerol-3-phosphate acyltransferase (235 aa).

6 helical membrane-spanning segments follow: residues 4–24 (LIAI…IMAG), 56–76 (AVTL…VAFF), 94–114 (LLAG…GFKG), 122–142 (AGML…IFLL), 152–172 (VASI…KYIF), and 191–211 (FHDS…LAIL).

This sequence belongs to the PlsY family. As to quaternary structure, probably interacts with PlsX.

The protein resides in the cell inner membrane. It carries out the reaction an acyl phosphate + sn-glycerol 3-phosphate = a 1-acyl-sn-glycero-3-phosphate + phosphate. It participates in lipid metabolism; phospholipid metabolism. Functionally, catalyzes the transfer of an acyl group from acyl-phosphate (acyl-PO(4)) to glycerol-3-phosphate (G3P) to form lysophosphatidic acid (LPA). This enzyme utilizes acyl-phosphate as fatty acyl donor, but not acyl-CoA or acyl-ACP. The sequence is that of Glycerol-3-phosphate acyltransferase from Chlorobium phaeobacteroides (strain DSM 266 / SMG 266 / 2430).